Here is a 138-residue protein sequence, read N- to C-terminus: Cysteine desulfuration protein SufE (138 aa).

Cys-51 serves as the catalytic Cysteine persulfide intermediate.

This sequence belongs to the SufE family. As to quaternary structure, homodimer. Interacts with SufS.

The protein localises to the cytoplasm. The protein operates within cofactor biosynthesis; iron-sulfur cluster biosynthesis. Its function is as follows. Participates in cysteine desulfuration mediated by SufS. Cysteine desulfuration mobilizes sulfur from L-cysteine to yield L-alanine and constitutes an essential step in sulfur metabolism for biosynthesis of a variety of sulfur-containing biomolecules. Functions as a sulfur acceptor for SufS, by mediating the direct transfer of the sulfur atom from the S-sulfanylcysteine of SufS, an intermediate product of cysteine desulfuration process. This is Cysteine desulfuration protein SufE from Escherichia coli O17:K52:H18 (strain UMN026 / ExPEC).